The chain runs to 1514 residues: Polycomb group protein ASXL1 (1514 aa).

The 76-residue stretch at 11–86 (RTWAEAARLV…RISLFTLKKD (76 aa)) folds into the HTH HARE-type domain. 2 disordered regions span residues 95–170 (ATVD…VMLP) and 183–249 (HVEP…RGEE). Residues 98-107 (DGDEPEDSAD) are compositionally biased toward acidic residues. The segment covering 111 to 145 (CGSNEASTVSGENDVSLDETSSNASCSTESQSRPL) has biased composition (polar residues). Residues 199–209 (SGSPSSSSSGS) are compositionally biased toward low complexity. The tract at residues 243–246 (KRNR) is interaction with nucleosomal DNA forming a DNA clamp with BAP1. The DEUBAD domain maps to 255–364 (PGSILVNTNL…FEDYYGQKLG (110 aa)). The LXXLL motif 1 motif lies at 284–288 (LLLLL). Positions 300 to 655 (LLRLSGSALN…GGGSGAIDEG (356 aa)) are interaction with NCOA1. Residues 310-315 (NEFFTH) carry the NEF motif motif. The segment at 336–346 (RLRQEMEKEKK) is interaction with nucleosomal DNA. 5 disordered regions span residues 378-543 (EEAK…EDRQ), 635-823 (TTAI…FDNM), 895-914 (SDPE…EKEW), 926-952 (SVPQ…SDSE), and 964-995 (ISEA…VDAS). The short motif at 408 to 415 (FKKRSRPD) is the Nuclear localization signal element. Polar residues predominate over residues 458–473 (VNSTPGPDVSSATSGQ). Residues Ser-498 and Ser-500 each carry the phosphoserine modification. Basic and acidic residues-rich tracts occupy residues 514–525 (QETKDQKRKSFE) and 533–543 (PEKKPRLEDRQ). A compositionally biased stretch (gly residues) spans 638 to 654 (IGGGGGPGGGGSGAIDE). The segment covering 678–692 (PSTSGESASDLQRTQ) has biased composition (polar residues). 2 stretches are compositionally biased toward basic and acidic residues: residues 713 to 728 (ARRE…ESCL) and 779 to 793 (LLDD…REDQ). Residues 808–812 (LGDLL) carry the LXXLL motif 2 motif. The span at 971–980 (HSESTDTASD) shows a compositional bias: polar residues. A required for interaction with RARA region spans residues 1082-1087 (LVMHLL). Disordered stretches follow at residues 1095-1131 (KVLP…ENNR), 1213-1234 (EQKE…GQCL), and 1256-1338 (SEQT…VSAD). Positions 1119–1129 (DRGTLQGTGEN) are enriched in polar residues. Composition is skewed to polar residues over residues 1256 to 1269 (SEQT…QNNA) and 1313 to 1324 (SKNSVSGGVQTT). Residues 1476–1513 (SLQCACSLKAMIMCQGCGAFCHDDCIGPSKLCVLCLVV) form a PHD-type; atypical zinc finger.

This sequence belongs to the Asx family. Core component of the polycomb repressive deubiquitinase (PR-DUB) complex, at least composed of BAP1, one of ASXL1, ASXL2 or (probably) ASXL3, and one of MBD5 or MBD6. Distinct combinations of ASXL and MBD proteins may preferentially bind specific histone modification marks. The PR-DUB core associates with a number of accessory proteins, including FOXK1, FOXK2, KDM1B, HCFC1 and OGT; KDM1B specifically associates with ASXL2 PR-DUB complexes. Interacts (via DEUBAD domain) with BAP1 (via ULD domain); the interaction is direct and forms a ubiquitin binding cleft. The interaction with BAP1 is important for maintaining BAP1 stability. Together with BAP1, associates (via DEUBAD domain) with nucleosomes; interacts with nucleosomal DNA and stabilizes the orientation of the nucleosome to line up the PR-DUB complex active site with its H2AK118ub1 substrate. Interacts (via PHD domain) with MBD5 and MBD6 (via MBD domain); the interaction is probably direct and mediates association of MBD proteins with the PR-DUB core. Interacts with RARA, RXRA. Interacts with NCOA1. Interacts with PPARA and PPARG. In terms of processing, ubiquitinated by TRIP12, leading to its subsequent degradation following binding of N(6)-methyladenine methylated DNA (6mA).

The protein localises to the nucleus. Its function is as follows. Probable Polycomb group (PcG) protein involved in transcriptional regulation mediated by ligand-bound nuclear hormone receptors, such as retinoic acid receptors (RARs) and peroxisome proliferator-activated receptor gamma (PPARG). Acts as a coactivator of RARA and RXRA through association with NCOA1. Acts as a corepressor for PPARG and suppresses its adipocyte differentiation-inducing activity. Non-catalytic component of the PR-DUB complex, a complex that specifically mediates deubiquitination of histone H2A monoubiquitinated at 'Lys-119' (H2AK119ub1). Acts as a sensor of N(6)-methyladenine methylation on DNA (6mA): recognizes and binds 6mA DNA, leading to its ubiquitination and degradation by TRIP12, thereby inactivating the PR-DUB complex and regulating Polycomb silencing. The PR-DUB complex is an epigenetic regulator of gene expression and acts as a transcriptional coactivator, affecting genes involved in development, cell communication, signaling, cell proliferation and cell viability. ASXL1, ASXL2 and ASXL3 function redundantly in the PR-DUB complex. The ASXL proteins are essential for chromatin recruitment and transcriptional activation of associated genes. ASXL1 and ASXL2 are important for BAP1 protein stability. Together with BAP1, negatively regulates epithelial-mesenchymal transition (EMT) of trophoblast stem cells during placental development by regulating genes involved in epithelial cell integrity, cell adhesion and cytoskeletal organization. This chain is Polycomb group protein ASXL1 (Asxl1), found in Mus musculus (Mouse).